We begin with the raw amino-acid sequence, 154 residues long: 17.6 kDa class I heat shock protein (154 aa).

In terms of domain architecture, sHSP spans 40–154 (ENSAFVNTRV…SDVKPIEISG (115 aa)).

The protein belongs to the small heat shock protein (HSP20) family. Forms oligomeric structures.

It localises to the cytoplasm. The polypeptide is 17.6 kDa class I heat shock protein (HSP17.6-L) (Glycine max (Soybean)).